Consider the following 608-residue polypeptide: MDELTLSIGGSPGKLAGTQLLYKQKIDKEIRLSPTDLLFSSNTVDHKLRNKRTTIALLSREVQARLGKWMISFADQKGTAADFGLQLAKWVQASTQLHYYVHPADMSALRAADQSLIRQLPRVTVEVCKTKKVSQTDPIEHKYQSRPGMIEGGVTITPRQAVTLEEIYPLASRPEKGVIMFMLSQAHLEHLIHPVIKQVSNYFTCVKVGTSGFSLNYNHPYIRAMFLEPITACDVVELPLQALHARFSAGKGHLYLCGDGHAPRTLTCAQMFDIPHVHDFTMPSVTVVSFYAPEQHIAIARYASWYEKDTICRLLQSTLPDVEKLVWLCAMSYPIFPSLRPTLTGSIFSRCKVVVSVSAERSRLLSDGLPKWAEWVDNVLSDRIAKPACLILIGPKASSKSFVTRQLVAKLNASSLSVEGDNFGRVDSDAFGKWVTMMVSNSTLPTSWAQFDLMQNDKEIASYVDIRFNDICVKHGFCELDDLRTKNAGVLQGEFARSFIEIIKDPSCGLRAFFSWLFSLYGLPRGLMLESHTNVEIAEYPPTTCILQLLPNYDVMSVLLERDARKGISKLAEMQMEEYYNGLRIGTYRSVLACELLRVAEVGPPVEG.

The protein resides in the virion. Its subcellular location is the host cytoplasm. The protein localises to the host cytoskeleton. Its function is as follows. Minor inner capsid component. Displays NTPase and RNA 5'-triphosphatase (RTPase) activities. May function as a cofactor of polymerase. Associates with microtubules and plays a role in the formation, structural organization and morphology of viral inclusions, where the assembly of cores and the replication of viral RNA occur. The protein is Microtubule-associated protein VP7 of Oryza latifolia (Indian wild rice).